The chain runs to 526 residues: ATP synthase subunit alpha (526 aa).

174–181 is an ATP binding site; the sequence is GDRKTGKT. The segment covering 505 to 520 has biased composition (basic and acidic residues); the sequence is FEPARSEVKVETRPQE. Positions 505–526 are disordered; sequence FEPARSEVKVETRPQEEEGEEG.

The protein belongs to the ATPase alpha/beta chains family. As to quaternary structure, F-type ATPases have 2 components, CF(1) - the catalytic core - and CF(0) - the membrane proton channel. CF(1) has five subunits: alpha(3), beta(3), gamma(1), delta(1), epsilon(1). CF(0) has three main subunits: a(1), b(2) and c(9-12). The alpha and beta chains form an alternating ring which encloses part of the gamma chain. CF(1) is attached to CF(0) by a central stalk formed by the gamma and epsilon chains, while a peripheral stalk is formed by the delta and b chains.

It is found in the cell membrane. It catalyses the reaction ATP + H2O + 4 H(+)(in) = ADP + phosphate + 5 H(+)(out). Produces ATP from ADP in the presence of a proton gradient across the membrane. The alpha chain is a regulatory subunit. The sequence is that of ATP synthase subunit alpha from Rubrobacter xylanophilus (strain DSM 9941 / JCM 11954 / NBRC 16129 / PRD-1).